We begin with the raw amino-acid sequence, 394 residues long: 3-dehydroquinate synthase (394 aa).

Residues 112–116 (GVIGD), 136–137 (TT), K149, K158, and 176–179 (TLAT) each bind NAD(+). E191, H254, and H276 together coordinate Zn(2+). Residues 371-388 (STNQHTTYSPHQHATTKP) are compositionally biased toward polar residues. The tract at residues 371–394 (STNQHTTYSPHQHATTKPPNRRPH) is disordered.

Belongs to the sugar phosphate cyclases superfamily. Dehydroquinate synthase family. The cofactor is NAD(+). Co(2+) serves as cofactor. It depends on Zn(2+) as a cofactor.

The protein localises to the cytoplasm. The enzyme catalyses 7-phospho-2-dehydro-3-deoxy-D-arabino-heptonate = 3-dehydroquinate + phosphate. It participates in metabolic intermediate biosynthesis; chorismate biosynthesis; chorismate from D-erythrose 4-phosphate and phosphoenolpyruvate: step 2/7. Its function is as follows. Catalyzes the conversion of 3-deoxy-D-arabino-heptulosonate 7-phosphate (DAHP) to dehydroquinate (DHQ). In Xylella fastidiosa (strain 9a5c), this protein is 3-dehydroquinate synthase.